Reading from the N-terminus, the 250-residue chain is MAVTKLVLVRHGESQWNNENRFTGWYDVDLSEKGRTEAKAAGELLKNEGFAFDFAYTSVLKRAIHTLWNILDELDQAWLPTEKSWKLNERHYGALQGLNKAETAEKYGDEQVKQWRRGFAVTPPELTKDDERYPGHDPRYSALTEQELPLTESLALTIDRVIPYWDEEILPRIKSGERVIVAAHGNSLRALVKYLDNLSEDEILELNIPTGVPLVYEFDENFKPIKRYYLGNADEIAAKAAAVANQGKAK.

Substrate is bound by residues 10-17 (RHGESQWN), 23-24 (TG), Arg-62, 89-92 (ERHY), Lys-100, 116-117 (RR), and 185-186 (GN). His-11 acts as the Tele-phosphohistidine intermediate in catalysis. Glu-89 serves as the catalytic Proton donor/acceptor.

Belongs to the phosphoglycerate mutase family. BPG-dependent PGAM subfamily. As to quaternary structure, homodimer.

The catalysed reaction is (2R)-2-phosphoglycerate = (2R)-3-phosphoglycerate. The protein operates within carbohydrate degradation; glycolysis; pyruvate from D-glyceraldehyde 3-phosphate: step 3/5. Functionally, catalyzes the interconversion of 2-phosphoglycerate and 3-phosphoglycerate. This is 2,3-bisphosphoglycerate-dependent phosphoglycerate mutase from Serratia proteamaculans (strain 568).